Here is an 89-residue protein sequence, read N- to C-terminus: UPF0335 protein Caul_0876 (89 aa).

Belongs to the UPF0335 family.

This chain is UPF0335 protein Caul_0876, found in Caulobacter sp. (strain K31).